The following is a 95-amino-acid chain: Progonadoliberin-1 (95 aa).

The signal sequence occupies residues 1–25; it reads MAPQTSNLWILLLLVVVMMMSQGCC. Gln26 carries the pyrrolidone carboxylic acid modification. At Gly35 the chain carries Glycine amide.

The protein belongs to the GnRH family.

It localises to the secreted. Functionally, stimulates the secretion of gonadotropins. The protein is Progonadoliberin-1 (gnrh1) of Sparus aurata (Gilthead sea bream).